The primary structure comprises 783 residues: Cadherin-5 (783 aa).

Positions 1–25 (MQALVMLLATGATYYLGLLAAAAAA) are cleaved as a signal peptide. Residues 26–45 (VNPGRPNTPGSLPAHRRQKR) constitute a propeptide that is removed on maturation. 5 consecutive Cadherin domains span residues 44-149 (KRDW…WPVF), 150-256 (THRV…FPIF), 257-371 (TQNR…PPIF), 372-478 (QQPF…APEF), and 478-585 (FAKP…GEFT). Residues 46–599 (DWIWNQMHID…AAAQVGISIQ (554 aa)) lie on the Extracellular side of the membrane. Positions 56 and 57 each coordinate Ca(2+). N59 carries an N-linked (GlcNAc...) asparagine glycan. 7 residues coordinate Ca(2+): D107, E109, D141, V142, N143, D144, and N145. N-linked (GlcNAc...) asparagine glycosylation occurs at N155. Positions 175, 177, 184, and 229 each coordinate Ca(2+). N-linked (GlcNAc...) asparagine glycosylation is found at N361, N441, and N523. The helical transmembrane segment at 600 to 620 (ALVAIFLCILTFTVITLLIIL) threads the bilayer. The interval 621–660 (RRRLRKQARAHGKSVPEIHEQLVTYDEEGGGEMDTTSYDV) is required for interaction with PALS1. At 621-783 (RRRLRKQARA…GSDPQEELVY (163 aa)) the chain is on the cytoplasmic side.

In terms of assembly, part of a complex composed of AMOTL2, MAGI1 and CDH5, within the complex AMOTL2 acts as a scaffold protein for the interaction of MAGI1 with CDH5. The complex is required for coupling actin fibers to cell junctions in endothelial cells. Within the complex AMOTL2 (via its N-terminus) interacts with CDH5. Interacts (via cadherin 5 domain) with PTPRB. Interacts with TRPC4. Interacts with KRIT1. Interacts with PARD3. Interacts with RTN4 (isoform B). Interacts with PALS1; the interaction promotes PALS1 localization to cell junctions and is required for CDH5-mediated vascular lumen formation and endothelial cell. Interacts with CTNND1/p120-catenin; the interaction controls CADH5 endocytosis. Phosphorylated on tyrosine residues by KDR/VEGFR-2. Dephosphorylated by PTPRB. In terms of processing, O-glycosylated.

It is found in the cell junction. Its subcellular location is the adherens junction. The protein localises to the cell membrane. The protein resides in the cytoplasm. Cadherins are calcium-dependent cell adhesion proteins. They preferentially interact with themselves in a homophilic manner in connecting cells; cadherins may thus contribute to the sorting of heterogeneous cell types. This cadherin may play a important role in endothelial cell biology through control of the cohesion and organization of the intercellular junctions. It associates with alpha-catenin forming a link to the cytoskeleton. Plays a role in coupling actin fibers to cell junctions in endothelial cells, via acting as a cell junctional complex anchor for AMOTL2 and MAGI1. Acts in concert with KRIT1 and PALS1 to establish and maintain correct endothelial cell polarity and vascular lumen. These effects are mediated by recruitment and activation of the Par polarity complex and RAP1B. Required for activation of PRKCZ and for localization of phosphorylated PRKCZ, PARD3, TIAM1 and RAP1B to the cell junction. Associates with CTNND1/p120-catenin to control CADH5 endocytosis. This Bos taurus (Bovine) protein is Cadherin-5.